The chain runs to 261 residues: Ribosome-inactivating protein PD-L1/PD-L2 (261 aa).

2 N-linked (GlcNAc...) asparagine; in PD-L1 and PD-L2 glycosylation sites follow: N10 and N43. 2 cysteine pairs are disulfide-bonded: C34–C258 and C84–C105. Y72 is an active-site residue. Substrate is bound at residue V73. S120 lines the substrate pocket. Active-site residues include Y122, E175, and R178. Position 178 (R178) interacts with substrate. Residue N255 is glycosylated (N-linked (GlcNAc...) asparagine; in PD-L1).

This sequence belongs to the ribosome-inactivating protein family. Type 1 RIP subfamily. Post-translationally, N-glycosylated. Loss of glycosylation does not affect DNA-cleaving ability. Loss of glycosylation does not affect protein synthesis inhibition, but increases adenine polynucleotide glycosidase activity likely as a consequence of the increased accessibility of substrates to the active site pocket in the absence of glycosylation. In terms of tissue distribution, expressed in leaves (at protein level).

The catalysed reaction is Endohydrolysis of the N-glycosidic bond at one specific adenosine on the 28S rRNA.. Functionally, inhibits protein synthesis. Has adenine polynucleotide glycosidase activity on herring sperm (hs)DNA and poly(A) substrates. Cleaves supercoiled pBR322 dsDNA. This Phytolacca dioica (Bella sombra tree) protein is Ribosome-inactivating protein PD-L1/PD-L2.